Here is a 257-residue protein sequence, read N- to C-terminus: tRNA pseudouridine synthase A (257 aa).

Catalysis depends on D43, which acts as the Nucleophile. Y94 serves as a coordination point for substrate.

The protein belongs to the tRNA pseudouridine synthase TruA family.

It carries out the reaction uridine(38/39/40) in tRNA = pseudouridine(38/39/40) in tRNA. Formation of pseudouridine at positions 38, 39 and 40 in the anticodon stem and loop of transfer RNAs. This Pyrobaculum arsenaticum (strain DSM 13514 / JCM 11321 / PZ6) protein is tRNA pseudouridine synthase A.